The following is a 436-amino-acid chain: F-box/LRR-repeat protein 20 (436 aa).

Positions 22-68 (AVINKKLPKELLLRIFSFLDVVTLCRCAQVSRAWNVLALDGSNWQRI) constitute an F-box domain. LRR repeat units lie at residues 74 to 100 (QRDI…SLRG), 101 to 126 (CLGV…SLNG), 127 to 152 (CTKT…DLAS), 153 to 178 (CTSI…NISW), 179 to 204 (CDQV…FLKG), 205 to 230 (CTQL…NLQT), 231 to 256 (CLQI…CASG), 257 to 282 (CSNI…EVAR), 283 to 308 (CSQL…DLEE), 309 to 334 (CVQI…SLSH), 335 to 363 (CELI…ELDN), 364 to 388 (CPLI…ELYD), and 389 to 414 (CQQI…AYFA). Thr417 carries the post-translational modification Phosphothreonine. Position 421 is a phosphoserine (Ser421).

In terms of assembly, interacts with SKP1 and CUL1. As to expression, highly expressed in brain.

It is found in the cytoplasm. Functionally, substrate-recognition component of the SCF (SKP1-CUL1-F-box protein)-type E3 ubiquitin ligase complex. Isoform 3 regulates neural transmission by binding and ubiquitinating RIMS1, a modulator of presynaptic plasticity. The chain is F-box/LRR-repeat protein 20 (Fbxl20) from Mus musculus (Mouse).